A 485-amino-acid chain; its full sequence is GTPase Obg (485 aa).

Residues 1–159 (MKFVDEVRIF…LTLRLELKLL (159 aa)) form the Obg domain. Residues 160–332 (ADVGLLGFPN…LMDSVAEVLF (173 aa)) enclose the OBG-type G domain. GTP contacts are provided by residues 166–173 (GFPNAGKS), 191–195 (FTTLV), 213–216 (DIPG), 284–287 (NKLD), and 313–315 (SCA). Residues serine 173 and threonine 193 each coordinate Mg(2+). Low complexity-rich tracts occupy residues 367–385 (AGAAAATKSATKKSAAAKK), 394–428 (RKAGAVAKTSAARKAGTAAAKKAPARKSGTAPVKK), 437–446 (RKSGTAPAKK), and 455–474 (RKSGSSGKAAAKKASAATKR). The interval 367–485 (AGAAAATKSA…PARKSGGGRS (119 aa)) is disordered.

Belongs to the TRAFAC class OBG-HflX-like GTPase superfamily. OBG GTPase family. As to quaternary structure, monomer. Requires Mg(2+) as cofactor.

Its subcellular location is the cytoplasm. Its function is as follows. An essential GTPase which binds GTP, GDP and possibly (p)ppGpp with moderate affinity, with high nucleotide exchange rates and a fairly low GTP hydrolysis rate. Plays a role in control of the cell cycle, stress response, ribosome biogenesis and in those bacteria that undergo differentiation, in morphogenesis control. The protein is GTPase Obg of Myxococcus xanthus (strain DK1622).